An 860-amino-acid polypeptide reads, in one-letter code: Nuclear pore complex protein NUP93B (860 aa).

Belongs to the nucleoporin interacting component (NIC) family. As to quaternary structure, part of the nuclear pore complex (NPC). The NPC has an eight-fold symmetrical structure comprising a central transport channel and two rings, the cytoplasmic and nuclear rings, to which eight filaments are attached. The cytoplasmic filaments have loose ends, while the nuclear filaments are joined in a distal ring, forming a nuclear basket. NPCs are highly dynamic in configuration and composition, and can be devided in 3 subcomplexes, the NUP62 subcomplex, the NUP107-160 subcomplex and the NUP93 subcomplex, containing approximately 30 different nucleoporin proteins.

It localises to the nucleus envelope. It is found in the nucleus. The protein resides in the nuclear pore complex. This is Nuclear pore complex protein NUP93B from Arabidopsis thaliana (Mouse-ear cress).